The primary structure comprises 115 residues: MSNIIKQIEQEQMKQDVPSFRPGDSVEVKVWVVEGTKKRLQAFEGVVIAIRNRGLHSAFTVRKISNGEGVERVFQTHSPVIDSISVKRRGAVRKAKLYYLRERTGKSARIKERLG.

It belongs to the bacterial ribosomal protein bL19 family.

In terms of biological role, this protein is located at the 30S-50S ribosomal subunit interface and may play a role in the structure and function of the aminoacyl-tRNA binding site. This is Large ribosomal subunit protein bL19 from Enterobacter sp. (strain 638).